The sequence spans 248 residues: tRNA (guanine-N(1)-)-methyltransferase (248 aa).

S-adenosyl-L-methionine contacts are provided by residues Gly-113 and 133-138; that span reads VGDYVL.

It belongs to the RNA methyltransferase TrmD family. As to quaternary structure, homodimer.

It is found in the cytoplasm. The catalysed reaction is guanosine(37) in tRNA + S-adenosyl-L-methionine = N(1)-methylguanosine(37) in tRNA + S-adenosyl-L-homocysteine + H(+). Specifically methylates guanosine-37 in various tRNAs. The chain is tRNA (guanine-N(1)-)-methyltransferase from Shewanella sp. (strain W3-18-1).